The chain runs to 378 residues: MGWIPCSGKSSGRNKTRRNGDHKLDRKSSDCSVSTSEKSRAKSSLSESKSKGSDHIVAQTFTFSELATATRNFRKECLIGEGGFGRVYKGYLASTSQTAAIKQLDHNGLQGNREFLVEVLMLSLLHHPNLVNLIGYCADGDQRLLVYEYMPLGSLEDHLHDISPGKQPLDWNTRMKIAAGAAKGLEYLHDKTMPPVIYRDLKCSNILLDDDYFPKLSDFGLAKLGPVGDKSHVSTRVMGTYGYCAPEYAMTGQLTLKSDVYSFGVVLLEIITGRKAIDSSRSTGEQNLVAWARPLFKDRRKFSQMADPMLQGQYPPRGLYQALAVAAMCVQEQPNLRPLIADVVTALSYLASQKFDPLAQPVQGSLFAPGTPPRSKRV.

Residues 1-49 (MGWIPCSGKSSGRNKTRRNGDHKLDRKSSDCSVSTSEKSRAKSSLSESK) are disordered. The N-myristoyl glycine moiety is linked to residue Gly-2. Residues 18-29 (RNGDHKLDRKSS) are compositionally biased toward basic and acidic residues. Low complexity predominate over residues 32-47 (SVSTSEKSRAKSSLSE). Phosphothreonine is present on Thr-62. In terms of domain architecture, Protein kinase spans 73–350 (FRKECLIGEG…ADVVTALSYL (278 aa)). ATP is bound by residues 79–87 (IGEGGFGRV) and Lys-102. Phosphotyrosine is present on Tyr-147. The active-site Proton acceptor is Asp-200. Residues Ser-204 and Ser-234 each carry the phosphoserine modification. Thr-235 and Thr-240 each carry phosphothreonine. A Phosphotyrosine modification is found at Tyr-248.

It belongs to the protein kinase superfamily. Ser/Thr protein kinase family. As to quaternary structure, interacts with BSU1 and BSL1. Post-translationally, phosphorylated at Ser-43, Ser-46 and Ser-234. In terms of tissue distribution, widely expressed.

It is found in the cell membrane. It carries out the reaction L-seryl-[protein] + ATP = O-phospho-L-seryl-[protein] + ADP + H(+). It catalyses the reaction L-threonyl-[protein] + ATP = O-phospho-L-threonyl-[protein] + ADP + H(+). In terms of biological role, serine/threonine-protein kinase involved in the positive regulation of brassinosteroid (BR) signaling and plant growth. Phosphorylates both BSU1 and BSL1 in vitro. The sequence is that of Probable serine/threonine-protein kinase PBL7 from Arabidopsis thaliana (Mouse-ear cress).